The sequence spans 182 residues: Putative manganese efflux pump MntP (182 aa).

Transmembrane regions (helical) follow at residues 6-26 (TVLV…GVGT), 37-57 (LSFH…FVGS), 59-79 (AADL…LFIG), 104-126 (SSLV…SFGI), 131-149 (LFLS…TWGA), and 164-181 (METV…KLLL).

Belongs to the MntP (TC 9.B.29) family.

The protein resides in the cell inner membrane. In terms of biological role, probably functions as a manganese efflux pump. The chain is Putative manganese efflux pump MntP from Syntrophobacter fumaroxidans (strain DSM 10017 / MPOB).